The primary structure comprises 156 residues: CYICHSLKYDRIYSNKNSLCYVFLIWTLTLIAIMPNLQTGTLQYDPRIYSCTFTQSVSSAYTIALVVFHFVVPMIIVTFCYLRIWILVLQVRRRVKPDSKPKLKPQDFRNFVTMFVVFVLFALCWAPLNFIGLIVASDPATMAPRIPEWLFVASYY.

3 helical membrane-spanning segments follow: residues 19–39 (LCYV…NLQT), 62–82 (TIAL…FCYL), and 115–135 (FVVF…GLIV).

It belongs to the G-protein coupled receptor 1 family. As to expression, at least in the brain, more precisely in the pars tuberalis and the suprachiasmatic nucleus.

Its subcellular location is the cell membrane. Functionally, high affinity receptor for melatonin. Likely to mediate the reproductive and circadian actions of melatonin. The activity of this receptor is mediated by pertussis toxin sensitive G proteins that inhibit adenylate cyclase activity. Possibly involved in sleep induction, by melatonin activation of the potassium channel KCNMA1/BK and the dissociation of G-beta and G-gamma subunits, thereby decreasing synaptic transmission. This chain is Melatonin receptor type 1A (Mtnr1a), found in Rattus norvegicus (Rat).